The following is a 146-amino-acid chain: Acidic phospholipase A2 C (146 aa).

The first 21 residues, 1–21 (MNPAHLLILAAVCVSPLGASS), serve as a signal peptide directing secretion. Residues 22-27 (NRPMPL) constitute a propeptide that is removed on maturation. Cystine bridges form between Cys38–Cys98, Cys53–Cys145, Cys55–Cys71, Cys70–Cys126, Cys77–Cys119, Cys87–Cys112, and Cys105–Cys117. Ca(2+) is bound by residues Tyr54, Gly56, and Gly58. Residue His74 is part of the active site. Position 75 (Asp75) interacts with Ca(2+). Asp120 is an active-site residue.

This sequence belongs to the phospholipase A2 family. Group I subfamily. D49 sub-subfamily. The cofactor is Ca(2+). As to expression, expressed by the venom gland.

It localises to the secreted. The catalysed reaction is a 1,2-diacyl-sn-glycero-3-phosphocholine + H2O = a 1-acyl-sn-glycero-3-phosphocholine + a fatty acid + H(+). Its function is as follows. PLA2 catalyzes the calcium-dependent hydrolysis of the 2-acyl groups in 3-sn-phosphoglycerides. This chain is Acidic phospholipase A2 C, found in Naja sputatrix (Malayan spitting cobra).